The following is a 419-amino-acid chain: Protein indeterminate-domain 14 (419 aa).

The segment at 1–58 (MIDYERSNTTKNINTHHHNPPPSSSSSDLLPDGNGTAVTQKRKRRPAGTPDPEAEVVS) is disordered. 3 consecutive C2H2-type zinc fingers follow at residues 70–92 (YVCEICNQGFQRDQNLQMHRRRH), 112–142 (YVCPEPTCLHHNPCHALGDLVGIKKHFRRKH), and 148–175 (WICERCSKGYAVQSDYKAHLKTCGTRGH). Residues Cys-150, Cys-153, His-166, Cys-170, Cys-177, Cys-179, His-192, and Cys-196 each contribute to the Zn(2+) site. The CCHC-type 2; atypical zinc finger occupies 175–198 (HSCDCGRVFSRVESFIEHQDTCTV). An SHR-binding region spans residues 185 to 197 (RVESFIEHQDTCT). Disordered stretches follow at residues 200–259 (RSQP…PSTL) and 298–318 (SEVEKKSYEKGETSLEREEAR). Low complexity-rich tracts occupy residues 213–230 (QHTTNATQTASTAENNEN) and 246–259 (RRQSPPSEQQPSTL). Residues 313 to 349 (EREEARRETKRQIEIAELEFAEAKRIRQHARAELHKA) adopt a coiled-coil conformation.

In terms of assembly, homo- and heterodimer of IDD14alpha and IDD14beta. As to expression, expressed in cotyledons and the vasculature of reosette leaves. Weak expression in hypocotyls and floral organs, but not detected in roots and inflorescence stems.

It localises to the nucleus. Functionally, transcription factor regulating starch metabolism by binding directly to the promoter of QQS. The IDD14beta isoform attenuates the transcription factor activity by competitively forming heterodimers with reduced DNA-binding capacity. Regulates lateral organ morphogenesis and gravitropic responses. Has a redundant role with IDD16 in directing leaf and floral organ morphogenesis. Involved in the establishment of auxin gradients through the regulation of auxin biosynthesis and transport. This chain is Protein indeterminate-domain 14, found in Arabidopsis thaliana (Mouse-ear cress).